Consider the following 150-residue polypeptide: Ribosomal RNA large subunit methyltransferase H (150 aa).

S-adenosyl-L-methionine-binding positions include Ala-100 and 118-123 (LSEMTF).

This sequence belongs to the RNA methyltransferase RlmH family. Homodimer.

Its subcellular location is the cytoplasm. It carries out the reaction pseudouridine(1915) in 23S rRNA + S-adenosyl-L-methionine = N(3)-methylpseudouridine(1915) in 23S rRNA + S-adenosyl-L-homocysteine + H(+). Specifically methylates the pseudouridine at position 1915 (m3Psi1915) in 23S rRNA. The chain is Ribosomal RNA large subunit methyltransferase H from Helicobacter pylori (strain ATCC 700392 / 26695) (Campylobacter pylori).